The primary structure comprises 117 residues: Large ribosomal subunit protein uL18 (117 aa).

It belongs to the universal ribosomal protein uL18 family. In terms of assembly, part of the 50S ribosomal subunit; part of the 5S rRNA/L5/L18/L25 subcomplex. Contacts the 5S and 23S rRNAs.

This is one of the proteins that bind and probably mediate the attachment of the 5S RNA into the large ribosomal subunit, where it forms part of the central protuberance. The polypeptide is Large ribosomal subunit protein uL18 (Phytoplasma australiense).